A 356-amino-acid polypeptide reads, in one-letter code: uncharacterized protein (356 aa).

Belongs to the NAD(P)-dependent epimerase/dehydratase family. NAD(+) is required as a cofactor. It depends on NADP(+) as a cofactor.

Functionally, putative nucleotide sugar epimerase/dehydrogenase. This is an uncharacterized protein from Sinorhizobium fredii (strain NBRC 101917 / NGR234).